The sequence spans 393 residues: E3 ubiquitin-protein transferase RMND5B (393 aa).

Methionine 1 is modified (N-acetylmethionine). In terms of domain architecture, LisH spans 116-148 (QQQILQMAIVEHLYQQGMLSVAEELCQESTLNV). A CTLH domain is found at 155–212 (PFLELNRILEALHEQDLGPALEWAVSHRQRLLELNSSLEFKLHRLHFIRLLAGGPAKQ). Residues 338–379 (CPILRQQTSDSNPPIKLICGHVISRDALNKLINGGKLKCPYC) form an RING-Gid-type zinc finger.

As to quaternary structure, identified in the CTLH complex that contains GID4, RANBP9 and/or RANBP10, MKLN1, MAEA, RMND5A (or alternatively its paralog RMND5B), GID8, ARMC8, WDR26 and YPEL5. Within this complex, MAEA, RMND5A (or alternatively its paralog RMND5B), GID8, WDR26, and RANBP9 and/or RANBP10 form the catalytic core, while GID4, MKLN1, ARMC8 and YPEL5 have ancillary roles.

It localises to the cytoplasm. The protein localises to the cytosol. The enzyme catalyses S-ubiquitinyl-[E2 ubiquitin-conjugating enzyme]-L-cysteine + [acceptor protein]-L-lysine = [E2 ubiquitin-conjugating enzyme]-L-cysteine + N(6)-ubiquitinyl-[acceptor protein]-L-lysine.. Its function is as follows. Core component of the CTLH E3 ubiquitin-protein ligase complex that selectively accepts ubiquitin from UBE2H and mediates ubiquitination and subsequent proteasomal degradation of the transcription factor HBP1. MAEA and RMND5A are both required for catalytic activity of the CTLH E3 ubiquitin-protein ligase complex. Catalytic activity of the complex is required for normal cell proliferation. The CTLH E3 ubiquitin-protein ligase complex is not required for the degradation of enzymes involved in gluconeogenesis, such as FBP1. This chain is E3 ubiquitin-protein transferase RMND5B (RMND5B), found in Homo sapiens (Human).